The chain runs to 375 residues: Neutral protease 2 homolog MGYG_00813 (375 aa).

An N-terminal signal peptide occupies residues 1–19 (MQVIVALAALSSLAAPALG). Positions 20 to 190 (FSIPRGVPVS…SGPLTRIGKR (171 aa)) are excised as a propeptide. 2 cysteine pairs are disulfide-bonded: cysteine 198-cysteine 268 and cysteine 275-cysteine 293. Histidine 318 serves as a coordination point for Zn(2+). Residue glutamate 319 is part of the active site. Residues histidine 322 and aspartate 333 each contribute to the Zn(2+) site.

Belongs to the peptidase M35 family. Requires Zn(2+) as cofactor.

The protein localises to the secreted. The enzyme catalyses Preferential cleavage of bonds with hydrophobic residues in P1'. Also 3-Asn-|-Gln-4 and 8-Gly-|-Ser-9 bonds in insulin B chain.. Secreted metalloproteinase that allows assimilation of proteinaceous substrates. Shows high activities on basic nuclear substrates such as histone and protamine. May be involved in virulence. This Arthroderma gypseum (strain ATCC MYA-4604 / CBS 118893) (Microsporum gypseum) protein is Neutral protease 2 homolog MGYG_00813.